Reading from the N-terminus, the 111-residue chain is uncharacterized protein (111 aa).

The segment at 12-34 (AWCPSRPPASAPSAPQEAARRGD) is disordered. A required for interaction with PPP3CA region spans residues 71–76 (PNIIIT). T79 and T81 each carry phosphothreonine.

In terms of assembly, interacts (via PxIxIT motif, when phosphorylated on Thr-79) with PPP3CA.

This is an uncharacterized protein from Mus musculus (Mouse).